A 530-amino-acid polypeptide reads, in one-letter code: Phosphoenolpyruvate carboxykinase (ATP) (530 aa).

Substrate is bound by residues Arg58, Tyr195, and Lys201. ATP contacts are provided by residues Lys201, His220, and 236-244 (GLSGTGKTT). Residues Lys201 and His220 each coordinate Mn(2+). Residue Asp257 coordinates Mn(2+). Residues Glu285, Arg321, 440-441 (RI), and Thr446 contribute to the ATP site. Substrate is bound at residue Arg321.

This sequence belongs to the phosphoenolpyruvate carboxykinase (ATP) family. Mn(2+) serves as cofactor.

Its subcellular location is the cytoplasm. The enzyme catalyses oxaloacetate + ATP = phosphoenolpyruvate + ADP + CO2. Its pathway is carbohydrate biosynthesis; gluconeogenesis. In terms of biological role, involved in the gluconeogenesis. Catalyzes the conversion of oxaloacetate (OAA) to phosphoenolpyruvate (PEP) through direct phosphoryl transfer between the nucleoside triphosphate and OAA. In Staphylococcus epidermidis (strain ATCC 12228 / FDA PCI 1200), this protein is Phosphoenolpyruvate carboxykinase (ATP).